The sequence spans 168 residues: Transcription elongation factor GreB (168 aa).

Belongs to the GreA/GreB family. GreB subfamily.

Its function is as follows. Necessary for efficient RNA polymerase transcription elongation past template-encoded arresting sites. The arresting sites in DNA have the property of trapping a certain fraction of elongating RNA polymerases that pass through, resulting in locked ternary complexes. Cleavage of the nascent transcript by cleavage factors such as GreA or GreB allows the resumption of elongation from the new 3'terminus. GreB releases sequences of up to 9 nucleotides in length. This chain is Transcription elongation factor GreB, found in Xanthomonas axonopodis pv. citri (strain 306).